Consider the following 694-residue polypeptide: Probable metal-nicotianamine transporter YSL8 (694 aa).

Transmembrane regions (helical) follow at residues I38–M58, L62–M82, C110–M130, L154–P174, I215–A235, V265–V285, V319–L339, I393–F413, V421–L441, G467–S487, M506–W526, L567–A587, F608–W628, and V643–L663.

Belongs to the YSL (TC 2.A.67.2) family. As to expression, expressed in root epidermis and exoderm.

Its subcellular location is the membrane. Functionally, may be involved in the transport of nicotianamine-chelated metals. This is Probable metal-nicotianamine transporter YSL8 (YSL8) from Oryza sativa subsp. japonica (Rice).